Consider the following 398-residue polypeptide: Serine/threonine-protein phosphatase 2A activator (398 aa).

Residues arginine 137, threonine 142, and glycine 143 each coordinate ATP. Residues glycine 197 and aspartate 203 each coordinate Mg(2+). ATP-binding residues include proline 293, glutamine 296, and histidine 297. Over residues 343–352 (PVATAPPPPA) the composition is skewed to pro residues. Positions 343-398 (PVATAPPPPAESLSIEQNVGDSSSESSDNSVVLRPSTSSSSLVAAAEGSGDKPSKE) are disordered. The span at 363–388 (DSSSESSDNSVVLRPSTSSSSLVAAA) shows a compositional bias: low complexity.

The protein belongs to the PTPA-type PPIase family. In terms of assembly, associates with PP2A heterodimeric core enzyme PP2A(D), composed of a catalytic subunit (subunit C) and a constant regulatory subunit (PR65 or subunit A). Interacts with the catalytic subunit Pp4-19C of the serine/threonine-protein phosphatase 4 (PP4) complex; thereby mediating basal localization of the Miranda (Mira) complex; probably by facilitating the dephosphorylation of Mira.

Its subcellular location is the cytoplasm. It is found in the nucleus. The enzyme catalyses [protein]-peptidylproline (omega=180) = [protein]-peptidylproline (omega=0). PPIases accelerate the folding of proteins. It catalyzes the cis-trans isomerization of proline imidic peptide bonds in oligopeptides. Acts as a regulatory subunit for serine/threonine-protein phosphatase 2A (PP2A). Modulates PP2A activity or substrate specificity, probably by inducing a conformational change in the catalytic subunit, a proposed direct target of the PPIase. Acts as mediator for the basal localization of the Miranda (Mira) complex during mitosis of larval neuroblast asymmetric division. Associates with the phosphatase 4 (PP4) complex to mediate basal localization of Mira; probably by facilitating the dephosphorylation of Mira. Cortical association of Mira mediated by the PTPA-PP4 complex seems to be independent of aPKC activity. This is Serine/threonine-protein phosphatase 2A activator from Drosophila melanogaster (Fruit fly).